Consider the following 272-residue polypeptide: Dermonecrotic toxin LvSicTox-alphaIC1bii (272 aa).

The active site involves histidine 5. 2 residues coordinate Mg(2+): glutamate 25 and aspartate 27. Histidine 41 (nucleophile) is an active-site residue. Disulfide bonds link cysteine 45–cysteine 51 and cysteine 47–cysteine 189. Position 84 (aspartate 84) interacts with Mg(2+).

Belongs to the arthropod phospholipase D family. Class II subfamily. Mg(2+) is required as a cofactor. Expressed by the venom gland.

The protein resides in the secreted. The enzyme catalyses an N-(acyl)-sphingosylphosphocholine = an N-(acyl)-sphingosyl-1,3-cyclic phosphate + choline. It carries out the reaction an N-(acyl)-sphingosylphosphoethanolamine = an N-(acyl)-sphingosyl-1,3-cyclic phosphate + ethanolamine. It catalyses the reaction a 1-acyl-sn-glycero-3-phosphocholine = a 1-acyl-sn-glycero-2,3-cyclic phosphate + choline. The catalysed reaction is a 1-acyl-sn-glycero-3-phosphoethanolamine = a 1-acyl-sn-glycero-2,3-cyclic phosphate + ethanolamine. Dermonecrotic toxins cleave the phosphodiester linkage between the phosphate and headgroup of certain phospholipids (sphingolipid and lysolipid substrates), forming an alcohol (often choline) and a cyclic phosphate. This toxin acts on sphingomyelin (SM). It may also act on ceramide phosphoethanolamine (CPE), lysophosphatidylcholine (LPC) and lysophosphatidylethanolamine (LPE), but not on lysophosphatidylserine (LPS), and lysophosphatidylglycerol (LPG). It acts by transphosphatidylation, releasing exclusively cyclic phosphate products as second products. Induces dermonecrosis, hemolysis, increased vascular permeability, edema, inflammatory response, and platelet aggregation. The chain is Dermonecrotic toxin LvSicTox-alphaIC1bii from Loxosceles variegata (Recluse spider).